The sequence spans 372 residues: Non-structural protein NS2 (372 aa).

Positions 259–326 (NQIEKQHTTH…QESEPESPSF (68 aa)) are disordered. Residues 299-309 (TETTSTSSSHH) are compositionally biased toward low complexity.

In Aedes albopictus (Asian tiger mosquito), this protein is Non-structural protein NS2 (NS).